Reading from the N-terminus, the 273-residue chain is Flagellin FljM (273 aa).

This sequence belongs to the bacterial flagellin family. As to quaternary structure, in C.crescentus, the flagellar filament is composed of multiple flagellins of 29 kDa; 27 kDa and 25 kDa.

It is found in the secreted. Its subcellular location is the bacterial flagellum. Flagellin is the subunit protein which polymerizes to form the filaments of bacterial flagella. The polypeptide is Flagellin FljM (fljM) (Caulobacter vibrioides (strain ATCC 19089 / CIP 103742 / CB 15) (Caulobacter crescentus)).